The following is a 368-amino-acid chain: Transaldolase (368 aa).

Lys-140 (schiff-base intermediate with substrate) is an active-site residue.

Belongs to the transaldolase family. Type 2 subfamily.

It localises to the cytoplasm. It carries out the reaction D-sedoheptulose 7-phosphate + D-glyceraldehyde 3-phosphate = D-erythrose 4-phosphate + beta-D-fructose 6-phosphate. It functions in the pathway carbohydrate degradation; pentose phosphate pathway; D-glyceraldehyde 3-phosphate and beta-D-fructose 6-phosphate from D-ribose 5-phosphate and D-xylulose 5-phosphate (non-oxidative stage): step 2/3. Transaldolase is important for the balance of metabolites in the pentose-phosphate pathway. The sequence is that of Transaldolase from Thermobifida fusca (strain YX).